Reading from the N-terminus, the 663-residue chain is UvrABC system protein B (663 aa).

In terms of domain architecture, Helicase ATP-binding spans 27–414 (KNIENGVKDQ…SDNHIAEQLI (388 aa)). ATP is bound at residue 40-47 (GVTGSGKT). The Beta-hairpin signature appears at 93–116 (YYDYYQPEAYIKTTDTYIEKDSSV). The region spanning 432 to 594 (QVDDLLDEIR…IDPKSIIKEI (163 aa)) is the Helicase C-terminal domain. The UVR domain occupies 624–659 (EKEITKLEKKIKKLVEELDFEQAIILRDEMLKLKEL).

The protein belongs to the UvrB family. Forms a heterotetramer with UvrA during the search for lesions. Interacts with UvrC in an incision complex.

Its subcellular location is the cytoplasm. In terms of biological role, the UvrABC repair system catalyzes the recognition and processing of DNA lesions. A damage recognition complex composed of 2 UvrA and 2 UvrB subunits scans DNA for abnormalities. Upon binding of the UvrA(2)B(2) complex to a putative damaged site, the DNA wraps around one UvrB monomer. DNA wrap is dependent on ATP binding by UvrB and probably causes local melting of the DNA helix, facilitating insertion of UvrB beta-hairpin between the DNA strands. Then UvrB probes one DNA strand for the presence of a lesion. If a lesion is found the UvrA subunits dissociate and the UvrB-DNA preincision complex is formed. This complex is subsequently bound by UvrC and the second UvrB is released. If no lesion is found, the DNA wraps around the other UvrB subunit that will check the other stand for damage. This is UvrABC system protein B from Fusobacterium nucleatum subsp. nucleatum (strain ATCC 25586 / DSM 15643 / BCRC 10681 / CIP 101130 / JCM 8532 / KCTC 2640 / LMG 13131 / VPI 4355).